The following is a 398-amino-acid chain: Phosphoglycerate kinase (398 aa).

Substrate is bound by residues aspartate 21–asparagine 23, arginine 36, histidine 59–arginine 62, arginine 119, and arginine 157. Residues lysine 208, glycine 296, glutamate 327, and glycine 354–serine 357 each bind ATP.

It belongs to the phosphoglycerate kinase family. As to quaternary structure, monomer.

Its subcellular location is the cytoplasm. It catalyses the reaction (2R)-3-phosphoglycerate + ATP = (2R)-3-phospho-glyceroyl phosphate + ADP. Its pathway is carbohydrate degradation; glycolysis; pyruvate from D-glyceraldehyde 3-phosphate: step 2/5. The sequence is that of Phosphoglycerate kinase from Streptococcus uberis (strain ATCC BAA-854 / 0140J).